Reading from the N-terminus, the 457-residue chain is Fibrinogen C domain-containing protein 1-B (457 aa).

The interval 1–21 is disordered; sequence MGSDRWKNIRGTPQMEDSVQE. Residues 1 to 33 are Cytoplasmic-facing; it reads MGSDRWKNIRGTPQMEDSVQEKSQRKGCGYILC. Residues 34 to 54 form a helical; Signal-anchor for type II membrane protein membrane-spanning segment; it reads TVLLSVAVLLAVTVTGAVLFM. Topologically, residues 55–457 are extracellular; that stretch reads NQYHAPSTEP…MKIRPQREEN (403 aa). A Fibrinogen C-terminal domain is found at 231-454; it reads CANGSKPRDC…FTEMKIRPQR (224 aa). An N-linked (GlcNAc...) asparagine glycan is attached at asparagine 233. Cysteine 240 and cysteine 269 form a disulfide bridge. Asparagine 336 carries N-linked (GlcNAc...) asparagine glycosylation. The Ca(2+) site is built by aspartate 389 and aspartate 391. Residues cysteine 397 and cysteine 410 are joined by a disulfide bond.

As to quaternary structure, homotetramer; disulfide-linked.

The protein resides in the membrane. In terms of biological role, acetyl group-binding receptor which shows a calcium-dependent binding to acetylated structures such as chitin, some N-acetylated carbohydrates, and amino acids. The polypeptide is Fibrinogen C domain-containing protein 1-B (fibcd1-b) (Xenopus laevis (African clawed frog)).